The sequence spans 140 residues: MFVLKNFKIVFSYFPIVLQYILNVALICLGVVLSVFLMKEVIQFMQELKLDGNESSYHLIDSIVVFFLYFEFIVMIIKYFQMNFHFPLRYFIYIGITAIVRLIIIDHDSPLDLLLYACAIFVLISALFIANSKMMRWDLE.

The next 4 helical transmembrane spans lie at 16-36 (IVLQ…LSVF), 57-77 (YHLI…VMII), 85-105 (HFPL…LIII), and 110-130 (PLDL…LFIA).

It belongs to the PsiE family.

It is found in the cell membrane. The chain is Protein PsiE homolog from Bacillus cereus (strain ATCC 14579 / DSM 31 / CCUG 7414 / JCM 2152 / NBRC 15305 / NCIMB 9373 / NCTC 2599 / NRRL B-3711).